The following is a 342-amino-acid chain: Phenylalanine--tRNA ligase alpha subunit (342 aa).

Glu-260 contributes to the Mg(2+) binding site.

Belongs to the class-II aminoacyl-tRNA synthetase family. Phe-tRNA synthetase alpha subunit type 1 subfamily. Tetramer of two alpha and two beta subunits. Mg(2+) serves as cofactor.

The protein localises to the cytoplasm. The enzyme catalyses tRNA(Phe) + L-phenylalanine + ATP = L-phenylalanyl-tRNA(Phe) + AMP + diphosphate + H(+). The polypeptide is Phenylalanine--tRNA ligase alpha subunit (Nocardia farcinica (strain IFM 10152)).